A 149-amino-acid chain; its full sequence is Nucleoside diphosphate kinase 1 (149 aa).

Residues lysine 9, phenylalanine 57, arginine 85, threonine 91, arginine 102, and asparagine 112 each contribute to the ATP site. Histidine 115 serves as the catalytic Pros-phosphohistidine intermediate.

This sequence belongs to the NDK family. Homohexamer. Can also form dodecamers. Mg(2+) is required as a cofactor.

The protein localises to the nucleus. It carries out the reaction a 2'-deoxyribonucleoside 5'-diphosphate + ATP = a 2'-deoxyribonucleoside 5'-triphosphate + ADP. The catalysed reaction is a ribonucleoside 5'-diphosphate + ATP = a ribonucleoside 5'-triphosphate + ADP. Functionally, major role in the synthesis of nucleoside triphosphates other than ATP. The ATP gamma phosphate is transferred to the NDP beta phosphate via a ping-pong mechanism, using a phosphorylated active-site intermediate. Involved in transcription regulation. Has G-quadruplex (G4) DNA-binding activity, which is independent of its nucleotide-binding and kinase activity. Binds folded G4 with low nanomolar affinity and corresponding unfolded G-rich DNA more weakly. Stabilizes folded G4s regardless of whether they are prefolded or not. The protein is Nucleoside diphosphate kinase 1 of Zea mays (Maize).